We begin with the raw amino-acid sequence, 1774 residues long: U3 small nucleolar RNA-associated protein 10 (1774 aa).

The interval 1206 to 1226 (YDKHSSAGSNDEEAGSESEAE) is disordered. A compositionally biased stretch (acidic residues) spans 1215–1226 (NDEEAGSESEAE). One copy of the HEAT repeat lies at 1734 to 1772 (LVPIIAELLEDEDEEVEYEVRSGLVKVVESVMGEPFDRY).

Belongs to the HEATR1/UTP10 family. As to quaternary structure, component of the ribosomal small subunit (SSU) processome.

It is found in the nucleus. The protein resides in the nucleolus. Its function is as follows. Involved in nucleolar processing of pre-18S ribosomal RNA. Involved in ribosome biosynthesis. The sequence is that of U3 small nucleolar RNA-associated protein 10 from Kluyveromyces lactis (strain ATCC 8585 / CBS 2359 / DSM 70799 / NBRC 1267 / NRRL Y-1140 / WM37) (Yeast).